The sequence spans 244 residues: MGNKINPTGLRLGITQEHRSKWFATSKTYPILLQEDYKIRNFIQKKYSSAGISDVLIARKADQLELELKTARPGVIVGRQGSGIEELRSGIQKTIGDRTRQVRINVVEVERVDADAYLLAEYIAQQLEKRVAFRRTIRMALQRAQRAGVLGLKIQVGGRLNGAEIARSEWTREGRVPLHTLRAEVDYALREANTTYGVLGIKVWVFKGEVLPKEEQTIPVGAIPRRKGSRKPQQFEDRSSNENS.

The 72-residue stretch at 39 to 110 (IRNFIQKKYS…QVRINVVEVE (72 aa)) folds into the KH type-2 domain. Residues 221–244 (GAIPRRKGSRKPQQFEDRSSNENS) are disordered. Positions 233–244 (QQFEDRSSNENS) are enriched in basic and acidic residues.

The protein belongs to the universal ribosomal protein uS3 family. As to quaternary structure, part of the 30S ribosomal subunit. Forms a tight complex with proteins S10 and S14.

Its function is as follows. Binds the lower part of the 30S subunit head. Binds mRNA in the 70S ribosome, positioning it for translation. The chain is Small ribosomal subunit protein uS3 from Prochlorococcus marinus (strain MIT 9515).